The sequence spans 319 residues: MNTNKIGVLLANLGTPDEPTTPAVKRYLKQFLSDPRVIDLPKFKWQFILNYMILPKRSPKVAKLYREIWTEQGSPLLAISRQQQQALQDYFNRQNQNVLVELGMSYGNPSIESATDRLIKAGVSKIIVLPLYPQYSSTTTASVLDAFARGLTQQRNIVPFEFIHSYHNDPLYIQALANTIQLAEDEKLLFSFHGIPKRYQTEGDFYPEHCQQTAQLVADKLSLTDEQWLVTYQSRFGDEEWLQPYTDETLETLPSQGVKKIAVICAGFSADCLETLEEIAEENKENFLNAGGQSYRYIPALNANTDHINALAKLIEAKI.

Residues His-193 and Glu-274 each coordinate Fe cation.

The protein belongs to the ferrochelatase family.

The protein resides in the cytoplasm. It carries out the reaction heme b + 2 H(+) = protoporphyrin IX + Fe(2+). The protein operates within porphyrin-containing compound metabolism; protoheme biosynthesis; protoheme from protoporphyrin-IX: step 1/1. Functionally, catalyzes the ferrous insertion into protoporphyrin IX. The chain is Ferrochelatase from Actinobacillus pleuropneumoniae serotype 7 (strain AP76).